Consider the following 746-residue polypeptide: PAN2-PAN3 deadenylation complex subunit pan3 (746 aa).

The segment at 7-35 adopts a C3H1-type zinc-finger fold; sequence PKNQKQCKNIALHGYCRNSDKCEFSHELT. A compositionally biased stretch (low complexity) spans 64–97; it reads QQQQQQQNSNGNGSNNTATSNNPIISPNSNIASP. Disordered stretches follow at residues 64–100, 169–205, and 219–275; these read QQQQ…PLKK, DDQH…NMNN, and NASP…PSLQ. The span at 196–205 shows a compositional bias: polar residues; sequence NNGIDPNMNN. A compositionally biased stretch (low complexity) spans 221-275; that stretch reads SPQSYQQQFQQPNPSPQSSSQQQQQQQQQQQQAVYQQQQQQQPSSQPLAQNPSLQ. Residues 351–610 are pseudokinase domain; that stretch reads DPNDPRIKNI…NIDEVVLMIS (260 aa). ATP-binding positions include Arg-407, 457–464, and 509–510; these read EFFPGSET and SK. A coiled-coil region spans residues 611–649; the sequence is GRLLQENNYLHTYTDDLETELSKEYENGRLFRLVTKLGF. Residues 650 to 746 are knob domain; that stretch reads INERPLYDMD…SELVSQKSHI (97 aa).

Belongs to the protein kinase superfamily. PAN3 family. As to quaternary structure, homodimer. Forms a heterotrimer with a catalytic subunit PAN2 to form the poly(A)-nuclease (PAN) deadenylation complex. Interacts (via PAM-2 motif) with poly(A)-binding protein (via PABC domain), conferring substrate specificity of the enzyme complex.

It is found in the cytoplasm. Regulatory subunit of the poly(A)-nuclease (PAN) deadenylation complex, one of two cytoplasmic mRNA deadenylases involved in mRNA turnover. PAN specifically shortens poly(A) tails of RNA and the activity is stimulated by poly(A)-binding protein (PABP). PAN deadenylation is followed by rapid degradation of the shortened mRNA tails by the CCR4-NOT complex. Deadenylated mRNAs are then degraded by two alternative mechanisms, namely exosome-mediated 3'-5' exonucleolytic degradation, or deadenylation-dependent mRNA decaping and subsequent 5'-3' exonucleolytic degradation by XRN1. PAN3 acts as a positive regulator for PAN activity, recruiting the catalytic subunit PAN2 to mRNA via its interaction with RNA and PABP. This is PAN2-PAN3 deadenylation complex subunit pan3 from Dictyostelium discoideum (Social amoeba).